The primary structure comprises 446 residues: Chromosomal replication initiator protein DnaA (446 aa).

The segment at 1–81 (MENIADLWNS…AKLNIRFIIP (81 aa)) is domain I, interacts with DnaA modulators. Positions 81-109 (PQSQTEEEVDYPPAKAKKMNDESNHLPQS) are domain II. Positions 110 to 326 (MLNPKYTFDT…GALIRVVAYS (217 aa)) are domain III, AAA+ region. Positions 154, 156, 157, and 158 each coordinate ATP. The tract at residues 327–446 (SLINKDINAD…QIEEINDILK (120 aa)) is domain IV, binds dsDNA.

This sequence belongs to the DnaA family. As to quaternary structure, oligomerizes as a right-handed, spiral filament on DNA at oriC.

It localises to the cytoplasm. Its function is as follows. Plays an essential role in the initiation and regulation of chromosomal replication. ATP-DnaA binds to the origin of replication (oriC) to initiate formation of the DNA replication initiation complex once per cell cycle. Binds the DnaA box (a 9 base pair repeat at the origin) and separates the double-stranded (ds)DNA. Forms a right-handed helical filament on oriC DNA; dsDNA binds to the exterior of the filament while single-stranded (ss)DNA is stabiized in the filament's interior. The ATP-DnaA-oriC complex binds and stabilizes one strand of the AT-rich DNA unwinding element (DUE), permitting loading of DNA polymerase. After initiation quickly degrades to an ADP-DnaA complex that is not apt for DNA replication. Binds acidic phospholipids. The protein is Chromosomal replication initiator protein DnaA of Bacillus cytotoxicus (strain DSM 22905 / CIP 110041 / 391-98 / NVH 391-98).